Here is a 939-residue protein sequence, read N- to C-terminus: Isoleucine--tRNA ligase (939 aa).

Residues 57–67 (PYANGHIHLGH) carry the 'HIGH' region motif. Glu561 contributes to the L-isoleucyl-5'-AMP binding site. The 'KMSKS' region motif lies at 602–606 (KMSKS). ATP is bound at residue Lys605. Zn(2+)-binding residues include Cys903, Cys906, Cys923, and Cys926.

This sequence belongs to the class-I aminoacyl-tRNA synthetase family. IleS type 1 subfamily. As to quaternary structure, monomer. It depends on Zn(2+) as a cofactor.

Its subcellular location is the cytoplasm. It catalyses the reaction tRNA(Ile) + L-isoleucine + ATP = L-isoleucyl-tRNA(Ile) + AMP + diphosphate. Its function is as follows. Catalyzes the attachment of isoleucine to tRNA(Ile). As IleRS can inadvertently accommodate and process structurally similar amino acids such as valine, to avoid such errors it has two additional distinct tRNA(Ile)-dependent editing activities. One activity is designated as 'pretransfer' editing and involves the hydrolysis of activated Val-AMP. The other activity is designated 'posttransfer' editing and involves deacylation of mischarged Val-tRNA(Ile). The polypeptide is Isoleucine--tRNA ligase (Desulfotalea psychrophila (strain LSv54 / DSM 12343)).